A 216-amino-acid polypeptide reads, in one-letter code: Probable GTP-binding protein EngB (216 aa).

Residues 30 to 204 enclose the EngB-type G domain; the sequence is SGLEVAFAGR…QMVLAGWLDL (175 aa). GTP is bound by residues 38–45, 64–68, 82–85, 149–152, and 182–185; these read GRSNAGKS, GRTQL, DLPG, TKAD, and LFSA. Mg(2+) is bound by residues S45 and T66.

It belongs to the TRAFAC class TrmE-Era-EngA-EngB-Septin-like GTPase superfamily. EngB GTPase family. Mg(2+) is required as a cofactor.

Functionally, necessary for normal cell division and for the maintenance of normal septation. The sequence is that of Probable GTP-binding protein EngB from Ectopseudomonas mendocina (strain ymp) (Pseudomonas mendocina).